The following is a 252-amino-acid chain: Triosephosphate isomerase (252 aa).

10–12 (NWK) contributes to the substrate binding site. The Electrophile role is filled by H96. E168 (proton acceptor) is an active-site residue. Residues G174, S213, and 234–235 (GG) each bind substrate.

Belongs to the triosephosphate isomerase family. As to quaternary structure, homodimer.

The protein resides in the cytoplasm. The catalysed reaction is D-glyceraldehyde 3-phosphate = dihydroxyacetone phosphate. It functions in the pathway carbohydrate biosynthesis; gluconeogenesis. The protein operates within carbohydrate degradation; glycolysis; D-glyceraldehyde 3-phosphate from glycerone phosphate: step 1/1. Involved in the gluconeogenesis. Catalyzes stereospecifically the conversion of dihydroxyacetone phosphate (DHAP) to D-glyceraldehyde-3-phosphate (G3P). The sequence is that of Triosephosphate isomerase from Idiomarina loihiensis (strain ATCC BAA-735 / DSM 15497 / L2-TR).